A 126-amino-acid polypeptide reads, in one-letter code: Large ribosomal subunit protein bL17 (126 aa).

The protein belongs to the bacterial ribosomal protein bL17 family. Part of the 50S ribosomal subunit. Contacts protein L32.

This is Large ribosomal subunit protein bL17 from Coxiella burnetii (strain CbuK_Q154) (Coxiella burnetii (strain Q154)).